A 92-amino-acid chain; its full sequence is Precursor of elicitor peptide 1 (92 aa).

A propeptide spanning residues 1-69 is cleaved from the precursor; that stretch reads MEKSDRRSEE…EKEEVVVTSR (69 aa). A disordered region spans residues 35–92; that stretch reads HQDSPTTSSPGTSKQPKEEKEDVTMEKEEVVVTSRATKVKAKQRGKEKVSSGRPGQHN. Positions 37–48 are enriched in polar residues; it reads DSPTTSSPGTSK. Basic and acidic residues predominate over residues 49–64; the sequence is QPKEEKEDVTMEKEEV.

This sequence belongs to the brassicaceae elicitor peptide family. In terms of assembly, interacts with its receptor PEPR1.

In terms of biological role, elicitor of plant defense. Induces the production of plant defensin (PDF1.2) and of H(2)O(2). Promotes resistance to the root fungal pathogen P.irregulare. Triggers the expression of several PROSCOOP genes (e.g. PROSCOOP2, PROSCOOP7, PROSCOOP8, PROSCOOP12 and PROSCOOP13). This chain is Precursor of elicitor peptide 1, found in Arabidopsis thaliana (Mouse-ear cress).